We begin with the raw amino-acid sequence, 421 residues long: Fumarylacetoacetase (421 aa).

Residue aspartate 131 participates in Ca(2+) binding. The active-site Proton acceptor is the histidine 138. Arginine 147 is a substrate binding site. 3 residues coordinate Ca(2+): glutamate 204, glutamate 206, and aspartate 238. Aspartate 238 is a binding site for Mg(2+). Substrate contacts are provided by glutamine 245 and tyrosine 249. The Mg(2+) site is built by lysine 258 and threonine 262. Threonine 355 provides a ligand contact to substrate.

It belongs to the FAH family. Ca(2+) is required as a cofactor. It depends on Mg(2+) as a cofactor.

It carries out the reaction 4-fumarylacetoacetate + H2O = acetoacetate + fumarate + H(+). Its pathway is amino-acid degradation; L-phenylalanine degradation; acetoacetate and fumarate from L-phenylalanine: step 6/6. Its function is as follows. Converts fumarylacetoacetate to acetoacetate and fumarate. Involved in tyrosine catabolic pathway. Catalyzes the final step in the tyrosine degradation pathway. The polypeptide is Fumarylacetoacetase (Arabidopsis thaliana (Mouse-ear cress)).